Reading from the N-terminus, the 390-residue chain is Chorismate synthase (390 aa).

NADP(+) contacts are provided by Arg-48 and Arg-54. Residues 125–127 (RSS), 238–239 (NA), Gly-278, 293–297 (KPTSS), and Arg-319 each bind FMN. A disordered region spans residues 359–390 (PRIPGSTTNQIHPVEMQASAPRAEDPEPDESS).

It belongs to the chorismate synthase family. In terms of assembly, homotetramer. FMNH2 is required as a cofactor.

The catalysed reaction is 5-O-(1-carboxyvinyl)-3-phosphoshikimate = chorismate + phosphate. It functions in the pathway metabolic intermediate biosynthesis; chorismate biosynthesis; chorismate from D-erythrose 4-phosphate and phosphoenolpyruvate: step 7/7. Catalyzes the anti-1,4-elimination of the C-3 phosphate and the C-6 proR hydrogen from 5-enolpyruvylshikimate-3-phosphate (EPSP) to yield chorismate, which is the branch point compound that serves as the starting substrate for the three terminal pathways of aromatic amino acid biosynthesis. This reaction introduces a second double bond into the aromatic ring system. This chain is Chorismate synthase, found in Nitrosomonas europaea (strain ATCC 19718 / CIP 103999 / KCTC 2705 / NBRC 14298).